The sequence spans 136 residues: Fatty acid-binding protein homolog 5 (136 aa).

Residues arginine 111 and 131-133 (RAY) each bind a fatty acid.

Belongs to the calycin superfamily. Fatty-acid binding protein (FABP) family.

The protein is Fatty acid-binding protein homolog 5 (lbp-5) of Caenorhabditis elegans.